We begin with the raw amino-acid sequence, 98 residues long: NADH-ubiquinone oxidoreductase chain 4L (98 aa).

A run of 3 helical transmembrane segments spans residues 1–21 (MSMV…GLLI), 30–50 (LLCL…TILT), and 61–81 (IILL…LVMI).

This sequence belongs to the complex I subunit 4L family. Core subunit of respiratory chain NADH dehydrogenase (Complex I) which is composed of 45 different subunits.

It is found in the mitochondrion inner membrane. The enzyme catalyses a ubiquinone + NADH + 5 H(+)(in) = a ubiquinol + NAD(+) + 4 H(+)(out). In terms of biological role, core subunit of the mitochondrial membrane respiratory chain NADH dehydrogenase (Complex I) which catalyzes electron transfer from NADH through the respiratory chain, using ubiquinone as an electron acceptor. Part of the enzyme membrane arm which is embedded in the lipid bilayer and involved in proton translocation. The polypeptide is NADH-ubiquinone oxidoreductase chain 4L (MT-ND4L) (Martes americana (American marten)).